The primary structure comprises 248 residues: MAKTLAQGRKPGSGRKPGKGKTLREGRKPGSGRRRRQDTGGKETDGSQQDQESRLISSRDMEAVDALRELTHSPSSHSAHNSSAAPPPHAAAASTSLPPSLDYTHQSFMDQQQQQQQQQQQQLLQQQRVDVVPPKPFITHKILLSSTGNSGGHVNSNYNADHSINHNSNHNLNSNVNVNMNFTINGSNQDPSSSFLMGPYNYLQRPFIVKPYLDLSTSTAASNQPRTQPSPAAHITKNSDSTEKNATI.

The DNA-binding element occupies 1 to 36 (MAKTLAQGRKPGSGRKPGKGKTLREGRKPGSGRRRR). Disordered regions lie at residues 1–127 (MAKT…LQQQ) and 219–248 (TAAS…NATI). Repeat copies occupy residues 8–12 (GRKPG), 14–18 (GRKPG), and 26–30 (GRKPG). The segment at 8 to 30 (GRKPGSGRKPGKGKTLREGRKPG) is 3 X 5 AA repeats of G-R-K-P-G. The segment covering 12-21 (GSGRKPGKGK) has biased composition (basic residues). Over residues 37-71 (QDTGGKETDGSQQDQESRLISSRDMEAVDALRELT) the composition is skewed to basic and acidic residues. Low complexity-rich tracts occupy residues 72-100 (HSPS…LPPS) and 111-127 (QQQQ…LQQQ).

In terms of assembly, binds as a dimer or higher oligomer.

Functionally, DNA-binding protein that recognizes oligo(A).oligo(T) tracts (A.T DNA). Can bind to any 11 bp sequence in which 10 bases conform to an uninterrupted oligo(A).oligo(T) tract. The sequence is that of Oligo(A)/oligo(T)-binding protein (DAT1) from Saccharomyces cerevisiae (strain ATCC 204508 / S288c) (Baker's yeast).